Reading from the N-terminus, the 90-residue chain is Small ribosomal subunit protein uS19 (90 aa).

This sequence belongs to the universal ribosomal protein uS19 family.

Functionally, protein S19 forms a complex with S13 that binds strongly to the 16S ribosomal RNA. This is Small ribosomal subunit protein uS19 from Rhizorhabdus wittichii (strain DSM 6014 / CCUG 31198 / JCM 15750 / NBRC 105917 / EY 4224 / RW1) (Sphingomonas wittichii).